A 202-amino-acid polypeptide reads, in one-letter code: uncharacterized protein (202 aa).

A disordered region spans residues 178–202; that stretch reads VCSSEDSEADRYSDYGWGGPSSPFN.

This is an uncharacterized protein from Homo sapiens (Human).